The sequence spans 748 residues: Catalase-peroxidase (748 aa).

Residues 92 to 238 constitute a cross-link (tryptophyl-tyrosyl-methioninium (Trp-Tyr) (with M-264)); sequence WHSAGTYRIG…LAAVQMGLIY (147 aa). His93 acts as the Proton acceptor in catalysis. Residues 238 to 264 constitute a cross-link (tryptophyl-tyrosyl-methioninium (Tyr-Met) (with W-92)); sequence YVNPEGPDGNPDPIASARDIRDTFARM. Residue His279 coordinates heme b.

The protein belongs to the peroxidase family. Peroxidase/catalase subfamily. As to quaternary structure, homodimer or homotetramer. Requires heme b as cofactor. Formation of the three residue Trp-Tyr-Met cross-link is important for the catalase, but not the peroxidase activity of the enzyme.

It carries out the reaction H2O2 + AH2 = A + 2 H2O. It catalyses the reaction 2 H2O2 = O2 + 2 H2O. Bifunctional enzyme with both catalase and broad-spectrum peroxidase activity. The sequence is that of Catalase-peroxidase from Xanthomonas euvesicatoria pv. vesicatoria (strain 85-10) (Xanthomonas campestris pv. vesicatoria).